We begin with the raw amino-acid sequence, 160 residues long: Ribosomal RNA large subunit methyltransferase H (160 aa).

S-adenosyl-L-methionine is bound by residues Leu-76, Gly-108, and 127–132 (FGRMTF).

It belongs to the RNA methyltransferase RlmH family. As to quaternary structure, homodimer.

Its subcellular location is the cytoplasm. The enzyme catalyses pseudouridine(1915) in 23S rRNA + S-adenosyl-L-methionine = N(3)-methylpseudouridine(1915) in 23S rRNA + S-adenosyl-L-homocysteine + H(+). Functionally, specifically methylates the pseudouridine at position 1915 (m3Psi1915) in 23S rRNA. The chain is Ribosomal RNA large subunit methyltransferase H from Methylocella silvestris (strain DSM 15510 / CIP 108128 / LMG 27833 / NCIMB 13906 / BL2).